The primary structure comprises 342 residues: ATP-dependent (S)-NAD(P)H-hydrate dehydratase (342 aa).

A YjeF C-terminal domain is found at Ile-11–Phe-337. (6S)-NADPHX-binding positions include Gly-127 and Asn-180–Arg-186. ATP contacts are provided by residues Lys-229 to Asp-233 and Gly-248 to Gly-257. A (6S)-NADPHX-binding site is contributed by Asp-258.

It belongs to the NnrD/CARKD family. It depends on Mg(2+) as a cofactor.

It catalyses the reaction (6S)-NADHX + ATP = ADP + phosphate + NADH + H(+). The enzyme catalyses (6S)-NADPHX + ATP = ADP + phosphate + NADPH + H(+). Its function is as follows. Catalyzes the dehydration of the S-form of NAD(P)HX at the expense of ATP, which is converted to ADP. Together with NAD(P)HX epimerase, which catalyzes the epimerization of the S- and R-forms, the enzyme allows the repair of both epimers of NAD(P)HX, a damaged form of NAD(P)H that is a result of enzymatic or heat-dependent hydration. This Physcomitrium patens (Spreading-leaved earth moss) protein is ATP-dependent (S)-NAD(P)H-hydrate dehydratase.